Consider the following 397-residue polypeptide: MAKAKYERSKPHVNIGTIGHVDHGKTTLTAAITTVLANKGFAEAFNYADIDKAPEEKERGITINTAHVEYQTENRHYAHVDCPGHADYVKNMITGAAQMDGAILVVSAADGPMPQTREHILLGSRVGIQYIVVFLNKADMVDDPELLELVEMEVRELLSEYDFPGDDIPVITGSALKALENPTDEEAIKPIMDLMEAVDSYIPTPERATDKPFLMPIEDVFTITGRGTVATGRVEAGVLHVGDEVEIVGLTEEKKKVVVTGIEMFRKLLDEAQAGDNIGALLRGVQRTDIERGQVLSKPNSVHPHTKFVGQVYVLKKEEGGRHTPFFDGYRPQFYFRTTDVTGSIKLPDGMEMVMPGDHIDMNVELITPIAMDEGLRFAIREGGRTVGSGVVTKIVE.

The 197-residue stretch at 10 to 206 (KPHVNIGTIG…AVDSYIPTPE (197 aa)) folds into the tr-type G domain. Positions 19–26 (GHVDHGKT) are G1. 19-26 (GHVDHGKT) is a binding site for GTP. Residue threonine 26 coordinates Mg(2+). A G2 region spans residues 60–64 (GITIN). The segment at 81-84 (DCPG) is G3. GTP-binding positions include 81–85 (DCPGH) and 136–139 (NKAD). Residues 136 to 139 (NKAD) form a G4 region. A G5 region spans residues 174–176 (SAL).

It belongs to the TRAFAC class translation factor GTPase superfamily. Classic translation factor GTPase family. EF-Tu/EF-1A subfamily. As to quaternary structure, monomer.

Its subcellular location is the cytoplasm. The enzyme catalyses GTP + H2O = GDP + phosphate + H(+). Its function is as follows. GTP hydrolase that promotes the GTP-dependent binding of aminoacyl-tRNA to the A-site of ribosomes during protein biosynthesis. This chain is Elongation factor Tu, found in Clostridium beijerinckii (strain ATCC 51743 / NCIMB 8052) (Clostridium acetobutylicum).